We begin with the raw amino-acid sequence, 272 residues long: MTLQEQIMKALHVQPVIDPKAEIRKRVDFLKDYVKKTGAKGFVLGISGGQDSTLAGRLAQLAVEEIRNEGGNATFIAVRLPYKVQKDEDDAQLALQFIQADQSVAFDIASTVDAFSNQYENLLGESLTDFNKGNVKARIRMVTQYAIGGQNGLLVIGTDHAAEAVTGFFTKFGDGGADLLPLTGLTKRQGRALLQELGADERLYLKMPTADLLDEKPGQADETELGITYDQLDDYLEGKAVPTDVAEKIEKRYTVSEHKRQVPASMFDDWWK.

ATP is bound at residue 45–52 (GISGGQDS). Asp51 provides a ligand contact to Mg(2+). Arg138 provides a ligand contact to deamido-NAD(+). Residue Thr158 coordinates ATP. Glu163 lines the Mg(2+) pocket. The deamido-NAD(+) site is built by Lys171 and Asp178. Lys187 and Thr209 together coordinate ATP. 258-259 (HK) contacts deamido-NAD(+).

It belongs to the NAD synthetase family. Homodimer.

It catalyses the reaction deamido-NAD(+) + NH4(+) + ATP = AMP + diphosphate + NAD(+) + H(+). It functions in the pathway cofactor biosynthesis; NAD(+) biosynthesis; NAD(+) from deamido-NAD(+) (ammonia route): step 1/1. In terms of biological role, catalyzes the ATP-dependent amidation of deamido-NAD to form NAD. Uses ammonia as a nitrogen source. In Bacillus cereus (strain AH187), this protein is NH(3)-dependent NAD(+) synthetase.